A 252-amino-acid chain; its full sequence is Ribosomal RNA small subunit methyltransferase J (252 aa).

Residues 101–102, 117–118, 153–154, and aspartate 171 each bind S-adenosyl-L-methionine; these read RD, ER, and SS.

Belongs to the methyltransferase superfamily. RsmJ family.

Its subcellular location is the cytoplasm. It catalyses the reaction guanosine(1516) in 16S rRNA + S-adenosyl-L-methionine = N(2)-methylguanosine(1516) in 16S rRNA + S-adenosyl-L-homocysteine + H(+). Functionally, specifically methylates the guanosine in position 1516 of 16S rRNA. The protein is Ribosomal RNA small subunit methyltransferase J of Salmonella schwarzengrund (strain CVM19633).